The primary structure comprises 432 residues: EF-hand calcium-binding domain-containing protein 3 (432 aa).

2 consecutive EF-hand domains span residues 45–80 and 81–116; these read AQLEAFRNAYNFFTKDRTGCIDSHGLISTIAKLGMN and LNTYDIYNELKCADLDRDGKINFSDFINVLTDKKLF. Ca(2+) is bound by residues aspartate 94, aspartate 96, aspartate 98, lysine 100, and aspartate 105. The residue at position 273 (tyrosine 273) is a Phosphotyrosine. Residues 394 to 432 are disordered; the sequence is SMNKSSPSNSGLSSPSDFSESDPETGRKRKRKSSRGFRQ. A compositionally biased stretch (low complexity) spans 395–411; it reads MNKSSPSNSGLSSPSDF. A compositionally biased stretch (basic residues) spans 420 to 432; the sequence is RKRKRKSSRGFRQ.

This Mus musculus (Mouse) protein is EF-hand calcium-binding domain-containing protein 3 (Efcab3).